The sequence spans 360 residues: Ribosomal RNA large subunit methyltransferase M (360 aa).

Residues Ser-190, 223–226 (CPGG), Asp-242, Asp-262, and Asp-280 each bind S-adenosyl-L-methionine. The active-site Proton acceptor is the Lys-309.

Belongs to the class I-like SAM-binding methyltransferase superfamily. RNA methyltransferase RlmE family. RlmM subfamily. Monomer.

The protein resides in the cytoplasm. The catalysed reaction is cytidine(2498) in 23S rRNA + S-adenosyl-L-methionine = 2'-O-methylcytidine(2498) in 23S rRNA + S-adenosyl-L-homocysteine + H(+). Catalyzes the 2'-O-methylation at nucleotide C2498 in 23S rRNA. This is Ribosomal RNA large subunit methyltransferase M from Haemophilus ducreyi (strain 35000HP / ATCC 700724).